Here is a 520-residue protein sequence, read N- to C-terminus: 2-isopropylmalate synthase (520 aa).

The region spanning 5 to 267 (VIIFDTTLRD…HTNINHQEIY (263 aa)) is the Pyruvate carboxyltransferase domain. Mn(2+)-binding residues include D14, H202, H204, and N238. The segment at 392–520 (RLDYFSVQSG…RLQQNNQEMV (129 aa)) is regulatory domain.

It belongs to the alpha-IPM synthase/homocitrate synthase family. LeuA type 1 subfamily. Homodimer. It depends on Mn(2+) as a cofactor.

It localises to the cytoplasm. It catalyses the reaction 3-methyl-2-oxobutanoate + acetyl-CoA + H2O = (2S)-2-isopropylmalate + CoA + H(+). It functions in the pathway amino-acid biosynthesis; L-leucine biosynthesis; L-leucine from 3-methyl-2-oxobutanoate: step 1/4. In terms of biological role, catalyzes the condensation of the acetyl group of acetyl-CoA with 3-methyl-2-oxobutanoate (2-ketoisovalerate) to form 3-carboxy-3-hydroxy-4-methylpentanoate (2-isopropylmalate). This Yersinia pseudotuberculosis serotype O:1b (strain IP 31758) protein is 2-isopropylmalate synthase.